The chain runs to 260 residues: ATP synthase subunit a (260 aa).

Transmembrane regions (helical) follow at residues 30 to 50, 96 to 116, 125 to 145, 151 to 171, 187 to 207, 213 to 233, and 234 to 254; these read IAFT…IVFV, LFAF…LVGV, FTVT…VGFA, FFSL…IFPI, LFVA…FVIS, VGTF…ICAL, and ELLV…VYLN.

The protein belongs to the ATPase A chain family. F-type ATPases have 2 components, CF(1) - the catalytic core - and CF(0) - the membrane proton channel. CF(1) has five subunits: alpha(3), beta(3), gamma(1), delta(1), epsilon(1). CF(0) has three main subunits: a(1), b(2) and c(9-12). The alpha and beta chains form an alternating ring which encloses part of the gamma chain. CF(1) is attached to CF(0) by a central stalk formed by the gamma and epsilon chains, while a peripheral stalk is formed by the delta and b chains.

It is found in the cell inner membrane. Functionally, key component of the proton channel; it plays a direct role in the translocation of protons across the membrane. The protein is ATP synthase subunit a of Novosphingobium aromaticivorans (strain ATCC 700278 / DSM 12444 / CCUG 56034 / CIP 105152 / NBRC 16084 / F199).